Consider the following 214-residue polypeptide: MVNSIFYIIMGPPGSGKGTQSQRLANHLGLPHISSGDLFRSAIKSATPLGSKAAEYINKGLLVPDNLVWEIVQETLNKPGCKSGCIIDGFPRTLDQAVLLNDFLVKSNAADYRVIQLDVSAEEIISRIHSRFICPACNYVYNQSQGFKECPTCHVALIRRSDDSLEVIHQRLESYEKATVPVINYYEDLGKLIHIPSETSPDEVFQSILACTEA.

ATP is bound at residue 14–19 (GSGKGT). Residues 34-63 (SSGDLFRSAIKSATPLGSKAAEYINKGLLV) are NMP. Residues Ser35, Arg40, 61–63 (LLV), 89–92 (GFPR), and Gln96 each bind AMP. The LID stretch occupies residues 130–163 (SRFICPACNYVYNQSQGFKECPTCHVALIRRSDD). Residue Arg131 coordinates ATP. Residues Cys134 and Cys137 each coordinate Zn(2+). 140-141 (VY) contacts ATP. Positions 150 and 153 each coordinate Zn(2+). Residues Arg160 and Arg171 each contribute to the AMP site. Thr199 is a binding site for ATP.

It belongs to the adenylate kinase family. Monomer.

Its subcellular location is the cytoplasm. It carries out the reaction AMP + ATP = 2 ADP. Its pathway is purine metabolism; AMP biosynthesis via salvage pathway; AMP from ADP: step 1/1. Catalyzes the reversible transfer of the terminal phosphate group between ATP and AMP. Plays an important role in cellular energy homeostasis and in adenine nucleotide metabolism. The chain is Adenylate kinase from Chlamydia caviae (strain ATCC VR-813 / DSM 19441 / 03DC25 / GPIC) (Chlamydophila caviae).